Consider the following 122-residue polypeptide: Small ribosomal subunit protein uS13 (122 aa).

The interval 93–122 (RRGLPVRGQRTKTNARTRKGPKKTIAGKKK) is disordered.

Belongs to the universal ribosomal protein uS13 family. Part of the 30S ribosomal subunit. Forms a loose heterodimer with protein S19. Forms two bridges to the 50S subunit in the 70S ribosome.

In terms of biological role, located at the top of the head of the 30S subunit, it contacts several helices of the 16S rRNA. In the 70S ribosome it contacts the 23S rRNA (bridge B1a) and protein L5 of the 50S subunit (bridge B1b), connecting the 2 subunits; these bridges are implicated in subunit movement. Contacts the tRNAs in the A and P-sites. This is Small ribosomal subunit protein uS13 from Corynebacterium urealyticum (strain ATCC 43042 / DSM 7109).